A 389-amino-acid polypeptide reads, in one-letter code: MVSVAEIRQAQRAEGPATILAIGTANPPNCVDQSTYPDYYFRITNSEHMTELKEKFQRMCDKSMIKKRYMYLTEEILKENPNMCAYMAPSLDARQDMVVVEVPKLGKEAATKAIKEWGQPKSKITHLIFCTTSGVDMPGADYQLTKQLGLRPYVKRYMMYQQGCFAGGTVLRLAKDLAENNKGARVLVVCSEITAVTFRGPSDTHLDSLVGQALFGDGAAAVIVGSDPIPQVEKPLYELVWTAQTIAPDSEGAIDGHLREVGLTFHLLKDVPGIVSKNIDKALFEAFNPLNISDYNSIFWIAHPGGPAILDQVEQKLGLKPEKMKATRDVLSDYGNMSSACVLFILDEMRRKSAENGLKTTGEGLEWGVLFGFGPGLTIETVVLRSVAI.

Residue Cys164 is part of the active site.

This sequence belongs to the thiolase-like superfamily. Chalcone/stilbene synthases family.

It carries out the reaction (E)-4-coumaroyl-CoA + 3 malonyl-CoA + 3 H(+) = 2',4,4',6'-tetrahydroxychalcone + 3 CO2 + 4 CoA. It functions in the pathway secondary metabolite biosynthesis; flavonoid biosynthesis. In terms of biological role, the primary product of this enzyme is 4,2',4',6'-tetrahydroxychalcone (also termed naringenin-chalcone or chalcone) which can under specific conditions spontaneously isomerize into naringenin. The sequence is that of Chalcone synthase (CHS) from Pueraria montana var. lobata (Kudzu vine).